The chain runs to 312 residues: Pre-mRNA-splicing factor 38A (312 aa).

The N-terminal protein interaction domain stretch occupies residues 1–179 (MANRTVKDAH…VLEETEQLDP (179 aa)). The tract at residues 180–312 (RVSALEEDMD…SHKKSRRGNE (133 aa)) is disordered. Over residues 184-201 (LEEDMDDVESSEEEEDED) the composition is skewed to acidic residues. Residues 202–223 (EKGRDPSPEHHRRNYRDLDRPR) are compositionally biased toward basic and acidic residues. Composition is skewed to basic residues over residues 224 to 294 (RSPS…RSHS) and 301 to 312 (KKSHKKSRRGNE).

This sequence belongs to the PRP38 family. Component of the spliceosome B complex.

The protein resides in the nucleus. Its function is as follows. Involved in pre-mRNA splicing as a component of the spliceosome. This chain is Pre-mRNA-splicing factor 38A (prpf38a), found in Xenopus tropicalis (Western clawed frog).